The chain runs to 408 residues: MSTVGGIEQLIPDSVSTSFIETVNGSHQFTIQGYSLAKGMSPGKFIQSDIFSVGGYDWAIYFYPDGKNPEDQSSYISLFIALASDSNDIRALFELTLMDQSGKGKHKVHSHFDRALEGGPYTLKYKGSMWGYKRFFKRSALETSDYLKDDCLVINCTVGVVRARLEGPKQYGIVLPLSNMGQGLKDLLDSEVGCDIAFQVGDETYKAHKLILAARSPVFRAQFFGPIGNNNVDRIVIDDIEPSIFKAMLSFIYTDVLPNVHEITGSTSASSFTNMIQHLLAAADLYDLARLKILCEVLLCEKLDVDNVATTLALAEQHQFLQLKAFCLEFVASPANLGAVMKSEGFKHLKQSCPTLLSELLNTVAAADKSSTSGQSNKKRSASSVLGCDTTNVRQLRRRTRKEVRAVS.

Positions 24–158 (NGSHQFTIQG…DDCLVINCTV (135 aa)) constitute an MATH domain. The BTB domain occupies 194–261 (CDIAFQVGDE…IYTDVLPNVH (68 aa)).

The protein belongs to the Tdpoz family. As to quaternary structure, homodimer or heterodimer with BPM3 and BPM5. Interacts with CUL3A and CUL3B. Interacts with RAP2-4 and RAP2-13. Binds to MYB56 at the promoter of FLOWERING LOCUS T (FT). As to expression, ubiquitous.

Its subcellular location is the nucleus. It localises to the cytoplasm. The protein operates within protein modification; protein ubiquitination. In terms of biological role, may act as a substrate-specific adapter of an E3 ubiquitin-protein ligase complex (CUL3-RBX1-BTB) which mediates the ubiquitination and subsequent proteasomal degradation of target proteins. The sequence is that of BTB/POZ and MATH domain-containing protein 3 from Arabidopsis thaliana (Mouse-ear cress).